Consider the following 59-residue polypeptide: MKILSVLLLALIICSIVGWSEAQFTDVSCTTSKECWSVCQRLHNTSIGKCMNKKCRCYS.

Residues 1–22 form the signal peptide; that stretch reads MKILSVLLLALIICSIVGWSEA. The residue at position 23 (glutamine 23) is a Pyrrolidone carboxylic acid. Intrachain disulfides connect cysteine 29–cysteine 50, cysteine 35–cysteine 55, and cysteine 39–cysteine 57. The tract at residues 48–55 is interaction with Ca(2+)-activated K(+) channels; that stretch reads GKCMNKKC.

It belongs to the short scorpion toxin superfamily. Potassium channel inhibitor family. Alpha-KTx 01 subfamily. As to expression, expressed by the venom gland.

It localises to the secreted. In terms of biological role, potent selective inhibitor of high conductance (maxi-K), different medium and small conductance calcium-activated potassium channels (KCa1.1/KCNMA1 and others), as well as a voltage-dependent potassium channel (Kv1.3/KCNA3&gt;Kv1.2/KCNA2&gt;Kv1.6/KCNA3&gt;&gt;Shaker/Sh). It blocks channel activity by a simple bimolecular inhibition process. Has a pH-specific antimicrobial activity against bacteria (B.subtilis, E.coli and S.aureus) and the fungus C.albicans. This chain is Potassium channel toxin alpha-KTx 1.12, found in Leiurus hebraeus (Hebrew deathstalker scorpion).